The sequence spans 381 residues: MSRHEGVSCDACLKGNFRGRRYKCLICYDYDLCASCYESGATTTRHTTDHPMQCILTRVDFDLYYGGEAFSVEQPQSFTCPYCGKMGYTETSLQEHVTSEHAETSTEVICPICAALPGGDPNHVTDDFAAHLTLEHRAPRDLDESSGVRHVRRMFHPGRGLGGPRARRSNMHFTSSSTGGLSSSQSSYSPSNREAMDPIAELLSQLSGVRRSAGGQLNSSGPSASQLQQLQMQLQLERQHAQAARQQLETARNATRRTNTSSVTTTITQSTATTNIANTESSQQTLQNSQFLLTRLNDPKMSETERQSMESERADRSLFVQELLLSTLVREESSSSDEDDRGEMADFGAMGCVDIMPLDVALENLNLKESNKGNEPPPPPL.

An N-acetylserine modification is found at Ser-2. Ser-2 carries the phosphoserine modification. A ZZ-type zinc finger spans residues 4–60 (HEGVSCDACLKGNFRGRRYKCLICYDYDLCASCYESGATTTRHTTDHPMQCILTRVD). The Zn(2+) site is built by Cys-9, Cys-12, Cys-24, Cys-27, Cys-33, Cys-36, His-46, and His-50. A C2H2-type zinc finger spans residues 78–101 (FTCPYCGKMGYTETSLQEHVTSEH). A disordered region spans residues 154–193 (MFHPGRGLGGPRARRSNMHFTSSSTGGLSSSQSSYSPSNR). Phosphoserine occurs at positions 169, 189, and 212. Residues 175–191 (SSSTGGLSSSQSSYSPS) show a composition bias toward low complexity. Residues 225-257 (SQLQQLQMQLQLERQHAQAARQQLETARNATRR) adopt a coiled-coil conformation. The segment at 294 to 314 (TRLNDPKMSETERQSMESERA) is disordered. Basic and acidic residues predominate over residues 297–314 (NDPKMSETERQSMESERA). A phosphoserine mark is found at Ser-335 and Ser-336.

Belongs to the KCMF1 family. Component of the SIFI complex, composed of KCMF1, UBR4 and calmodulin (CALM1, CALM2 or CALM3). In terms of tissue distribution, spleen, small intestine, ovary, peripheral blood, lung, kidney and pancreas. Expressed at low levels in the thymus, prostate, testis, colon, heart, brain, placenta and liver.

The protein localises to the cytoplasm. It is found in the late endosome. Its subcellular location is the lysosome. The enzyme catalyses S-ubiquitinyl-[E2 ubiquitin-conjugating enzyme]-L-cysteine + [acceptor protein]-L-lysine = [E2 ubiquitin-conjugating enzyme]-L-cysteine + N(6)-ubiquitinyl-[acceptor protein]-L-lysine.. The protein operates within protein modification; protein ubiquitination. E3 ubiquitin-protein ligase which accepts ubiquitin from an E2 ubiquitin-conjugating enzyme and then transfers it to targeted substrates, promoting their degradation by the proteasome. Together with UBR4, component of the N-end rule pathway: ubiquitinates proteins bearing specific N-terminal residues that are destabilizing according to the N-end rule, leading to their degradation. Does not ubiquitinate proteins that are acetylated at the N-terminus. Together with UBR4, part of a protein quality control pathway that catalyzes ubiquitination and degradation of proteins that have been oxidized in response to reactive oxygen species (ROS): recognizes proteins with an Arg-CysO3(H) degron at the N-terminus, and mediates assembly of heterotypic 'Lys-63'-/'Lys-27'-linked branched ubiquitin chains on oxidized proteins, leading to their degradation by autophagy. Catalytic component of the SIFI complex, a multiprotein complex required to inhibit the mitochondrial stress response after a specific stress event has been resolved: ubiquitinates and degrades (1) components of the HRI-mediated signaling of the integrated stress response, such as DELE1 and EIF2AK1/HRI, as well as (2) unimported mitochondrial precursors. Within the SIFI complex, UBR4 initiates ubiquitin chain that are further elongated or branched by KCMF1. This Homo sapiens (Human) protein is E3 ubiquitin-protein ligase KCMF1.